We begin with the raw amino-acid sequence, 897 residues long: Cytokine receptor common subunit beta (897 aa).

The first 16 residues, 1 to 16, serve as a signal peptide directing secretion; it reads MVLAQGLLSMALLALC. Residues 17-443 are Extracellular-facing; the sequence is WERSLAGAEE…WDTESVLPMW (427 aa). Cys-35 and Cys-45 are disulfide-bonded. The N-linked (GlcNAc...) asparagine glycan is linked to Asn-58. Disulfide bonds link Cys-75–Cys-96 and Cys-86–Cys-91. A Fibronectin type-III 1 domain is found at 133–240; sequence PPEPRDLQIS…PEVCWDSQPG (108 aa). Asn-191 carries N-linked (GlcNAc...) asparagine glycosylation. 2 disulfides stabilise this stretch: Cys-250–Cys-260 and Cys-289–Cys-306. A Fibronectin type-III 2 domain is found at 339 to 436; that stretch reads QMAPPSLNVT…EWSEARSWDT (98 aa). A glycan (N-linked (GlcNAc...) asparagine) is linked at Asn-346. A WSXWS motif motif is present at residues 425–429; the sequence is WSEWS. Residues 444–460 form a helical membrane-spanning segment; the sequence is VLALIVIFLTIAVLLAL. Residues 461 to 897 are Cytoplasmic-facing; sequence RFCGIYGYRL…WEVNKPGEVC (437 aa). The short motif at 474–482 is the Box 1 motif element; that stretch reads WEEKIPNPS. Disordered stretches follow at residues 498 to 517, 532 to 630, 648 to 812, and 830 to 849; these read GSMSAFTSGSPPHQGPWGSR, SEVS…EYLC, PGQA…QPEG, and PGPLSLRSKPSSPGPGPEIK. Pro residues predominate over residues 564 to 574; it reads EQPPSPQPGPP. Over residues 723–752 the composition is skewed to low complexity; sequence SGASSVSLVPSLGLPSDQTPSLCPGLASGP. Tyr-766 carries the phosphotyrosine modification. Low complexity predominate over residues 830-840; it reads PGPLSLRSKPS.

It belongs to the type I cytokine receptor family. Type 4 subfamily. As to quaternary structure, heterodimer of an alpha and a beta subunit. The beta subunit is common to the IL3, IL5 and GM-CSF receptors. The signaling GM-CSF receptor complex is a dodecamer of two head-to-head hexamers of two alpha, two beta, and two ligand subunits. Interacts with TMEM102; this interaction occurs preferentially in the absence of CSF2. Interacts with FCER1G; this interaction is direct. Interacts with LYN. Interacts with JAK1. Post-translationally, may be phosphorylated by LYN.

It is found in the membrane. Functionally, cell surface receptor that plays a role in immune response and controls the production and differentiation of hematopoietic progenitor cells into lineage-restricted cells. Acts by forming an heterodimeric receptor through interaction with different partners such as IL3RA, IL5RA or CSF2RA. In turn, participates in various signaling pathways including interleukin-3, interleukin-5 and granulocyte-macrophage colony-stimulating factor/CSF2 pathways. In unstimulated conditions, interacts constitutively with JAK1 and ligand binding leads to JAK1 stimulation and subsequent activation of the JAK-STAT pathway. This chain is Cytokine receptor common subunit beta (CSF2RB), found in Homo sapiens (Human).